The primary structure comprises 349 residues: Ferredoxin--NADP reductase (349 aa).

Asp-43, Gln-51, Tyr-56, Val-96, Phe-131, Asp-295, and Ser-336 together coordinate FAD.

The protein belongs to the ferredoxin--NADP reductase type 2 family. Homodimer. Requires FAD as cofactor.

It carries out the reaction 2 reduced [2Fe-2S]-[ferredoxin] + NADP(+) + H(+) = 2 oxidized [2Fe-2S]-[ferredoxin] + NADPH. The chain is Ferredoxin--NADP reductase from Paraburkholderia phytofirmans (strain DSM 17436 / LMG 22146 / PsJN) (Burkholderia phytofirmans).